A 223-amino-acid polypeptide reads, in one-letter code: Ribose-5-phosphate isomerase A (223 aa).

Substrate contacts are provided by residues T26–T29, D82–D85, and K95–G98. The Proton acceptor role is filled by E104. K122 lines the substrate pocket.

Belongs to the ribose 5-phosphate isomerase family. In terms of assembly, homodimer.

The enzyme catalyses aldehydo-D-ribose 5-phosphate = D-ribulose 5-phosphate. It participates in carbohydrate degradation; pentose phosphate pathway; D-ribose 5-phosphate from D-ribulose 5-phosphate (non-oxidative stage): step 1/1. In terms of biological role, catalyzes the reversible conversion of ribose-5-phosphate to ribulose 5-phosphate. This chain is Ribose-5-phosphate isomerase A, found in Streptococcus agalactiae serotype V (strain ATCC BAA-611 / 2603 V/R).